Here is a 597-residue protein sequence, read N- to C-terminus: ATP-dependent lipid A-core flippase (597 aa).

6 consecutive transmembrane segments (helical) span residues Trp26–Ala46, Ile65–Ile85, Ile144–Leu164, Gly166–Val186, Ala250–Leu270, and Met276–Leu296. One can recognise an ABC transmembrane type-1 domain in the interval Ala29–Arg311. The ABC transporter domain maps to Ile343–Leu579. Residue Gly377–Ser384 coordinates ATP.

This sequence belongs to the ABC transporter superfamily. Lipid exporter (TC 3.A.1.106) family. Homodimer.

Its subcellular location is the cell inner membrane. It catalyses the reaction ATP + H2O + lipid A-core oligosaccharideSide 1 = ADP + phosphate + lipid A-core oligosaccharideSide 2.. Its function is as follows. Involved in lipopolysaccharide (LPS) biosynthesis. Translocates lipid A-core from the inner to the outer leaflet of the inner membrane. Transmembrane domains (TMD) form a pore in the inner membrane and the ATP-binding domain (NBD) is responsible for energy generation. The protein is ATP-dependent lipid A-core flippase of Nitrosococcus oceani (strain ATCC 19707 / BCRC 17464 / JCM 30415 / NCIMB 11848 / C-107).